The chain runs to 451 residues: Protein FAM117A (451 aa).

The segment covering 1-25 (MSGAAAGGRGGGSWGPGRGGAGGLR) has biased composition (gly residues). 2 disordered regions span residues 1-83 (MSGA…RPQP) and 164-183 (RTKL…VQGD). Phosphoserine is present on residues Ser-29 and Ser-67. The stretch at 149–175 (TDHRKEITKLKQQLQRTKLSRSGKEKE) forms a coiled coil. 2 positions are modified to phosphoserine: Ser-193 and Ser-213. Residues 242–293 (DGHRAPAPPQNSSCDHSLLLEPGNLTSSPSVPLASPQPPSQASREEHQGATE) form a disordered region. Phosphoserine occurs at positions 318 and 326. The residue at position 353 (Thr-353) is a Phosphothreonine. Residues 403–451 (SPGSPLPTASPRAPRKGPEASKASSLPSEPWQRSPPSEESVLFQSSLVV) form a disordered region. Residues Ser-412 and Ser-426 each carry the phosphoserine modification. Positions 436 to 451 (SPPSEESVLFQSSLVV) are enriched in polar residues.

The protein belongs to the FAM117 family.

This Mus musculus (Mouse) protein is Protein FAM117A (Fam117a).